A 355-amino-acid polypeptide reads, in one-letter code: Uroporphyrinogen decarboxylase (355 aa).

Substrate-binding positions include 27 to 31, aspartate 78, tyrosine 155, serine 210, and histidine 328; that span reads RQAGR.

It belongs to the uroporphyrinogen decarboxylase family. Homodimer.

Its subcellular location is the cytoplasm. It carries out the reaction uroporphyrinogen III + 4 H(+) = coproporphyrinogen III + 4 CO2. Its pathway is porphyrin-containing compound metabolism; protoporphyrin-IX biosynthesis; coproporphyrinogen-III from 5-aminolevulinate: step 4/4. Its function is as follows. Catalyzes the decarboxylation of four acetate groups of uroporphyrinogen-III to yield coproporphyrinogen-III. The protein is Uroporphyrinogen decarboxylase of Pseudomonas paraeruginosa (strain DSM 24068 / PA7) (Pseudomonas aeruginosa (strain PA7)).